Consider the following 90-residue polypeptide: Phosphocarrier protein NPr (90 aa).

The region spanning Thr2 to Asp90 is the HPr domain. The Pros-phosphohistidine intermediate role is filled by His16.

It belongs to the HPr family.

The protein localises to the cytoplasm. Its function is as follows. Component of the phosphoenolpyruvate-dependent nitrogen-metabolic phosphotransferase system (nitrogen-metabolic PTS), that seems to be involved in regulating nitrogen metabolism. The phosphoryl group from phosphoenolpyruvate (PEP) is transferred to the phosphoryl carrier protein NPr by enzyme I-Ntr. Phospho-NPr then transfers it to EIIA-Ntr. Could function in the transcriptional regulation of sigma-54 dependent operons in conjunction with the NPr (PtsO) and EIIA-Ntr (PtsN) proteins. In Proteus mirabilis (strain HI4320), this protein is Phosphocarrier protein NPr (ptsO).